Reading from the N-terminus, the 495-residue chain is MRQIVPKVVVVGAGMGGLASAIRLARAGCEVTLLEAREAPGGRMRTLPSVAGPVDAGPTVLTLREVFDDIFEVCGQKLDHHLTLLPQPLLARHWWLDGSTLDLTTDLEANVEAVAAFAGAREARAFRRFHDLSARLYDAFDRPMMRAARPDLRAIATGALKAPRTWPALLPGMTLDRLLRLFFRDRRLRQLFGRYATYVGGTPYGAPGVLALIWAAEARGVWAIEGGMHRLALALARLADDQGVRLRYGAPVARILRQGGRATGVQLADGRTLPADHIVFNGDPAALLAGCLGDGPQDAVPEDRIHPRSLSAWVWSYAARASGPPLVHHNVFFADDPRREFGPIAAGQMPEDATLYICAEDRSGGQLPDGPERFEIIMNGPPGRPAKPEDFAQCRSRTFDRLRQFGLTFDPVPGETSLTAPSGFASLFPASQGSIYGLSPHGALASLKRPLARTALPGLWLAGGGAHPGAGVPMAALSGRHAAEAILADLASRSR.

This sequence belongs to the carotenoid/retinoid oxidoreductase family.

The catalysed reaction is rhodopin + A = (3E)-3,4-didehydrorhodopin + AH2. It functions in the pathway carotenoid biosynthesis; spheroidene biosynthesis. Functionally, catalyzes the introduction of C-3,4 double bonds into 1-hydroxyneurosporene (1-HO-Neu) to yield demethylspheroidene (DMS). It prefer the acyclic carotenoids such as 1-hydroxylycopene, and 1-hydroxy-gamma-carotene, whereas 1-hydroxy-3,4-didehydrolycopene and 1,1-dihydroxylycopene are much less effective. This Cereibacter sphaeroides (strain ATCC 17023 / DSM 158 / JCM 6121 / CCUG 31486 / LMG 2827 / NBRC 12203 / NCIMB 8253 / ATH 2.4.1.) (Rhodobacter sphaeroides) protein is Hydroxyneurosporene desaturase (crtD).